A 283-amino-acid polypeptide reads, in one-letter code: ATP synthase gamma chain (283 aa).

The protein belongs to the ATPase gamma chain family. As to quaternary structure, F-type ATPases have 2 components, CF(1) - the catalytic core - and CF(0) - the membrane proton channel. CF(1) has five subunits: alpha(3), beta(3), gamma(1), delta(1), epsilon(1). CF(0) has three main subunits: a, b and c.

The protein resides in the cell inner membrane. In terms of biological role, produces ATP from ADP in the presence of a proton gradient across the membrane. The gamma chain is believed to be important in regulating ATPase activity and the flow of protons through the CF(0) complex. The polypeptide is ATP synthase gamma chain (Ehrlichia ruminantium (strain Gardel)).